The primary structure comprises 98 residues: MDIDRGIRVAVDTGNVILGSKRTIQSLKLGKGKLVVMASNIPEDLKEDIEYYAKLSEIPVYTHEGTSVELGSVCGKPFTVGALLIQDPGDSTILEMVG.

This sequence belongs to the eukaryotic ribosomal protein eL30 family.

This Methanothermobacter thermautotrophicus (strain ATCC 29096 / DSM 1053 / JCM 10044 / NBRC 100330 / Delta H) (Methanobacterium thermoautotrophicum) protein is Large ribosomal subunit protein eL30 (rpl30e).